The sequence spans 410 residues: MQRKGILIILDGLGDRPIKELGGLTPLEYANTPNMDKLAKIGILGQQDPIKPGQPAGSDTAHLSIFGYDPYKTYRGRGFFEALGVGLDLDEDDLAFRVNFATLKDGIVVDRRAGRISTEEAHELAKAIQEEVDVGVDFIFKGATGHRAVLVLKGMADGYRVGDNDPHVEGKPPHKFSWEDEESKKVAEILEEFVKKAHEVLERHPINEKRRREGKPVANYLLIRGAGTYPNIPMKFTEQWKVKAAAVIAVALVKGVARAIGFDVYTPEGATGEYNTNEMAKAKKVVELLKDYDFVFLHFKPTDAAGHDNKPKLKAELIERADKMIGYIIDNIDLESTVIAITGDHSTPCEVKNHSGDPVPLLIAGGGVRTDHTERFGEREAMKGGLGRIRGHDIVPIMMDLMNRSEKFGA.

Belongs to the BPG-independent phosphoglycerate mutase family. A-PGAM subfamily.

It catalyses the reaction (2R)-2-phosphoglycerate = (2R)-3-phosphoglycerate. It participates in carbohydrate degradation; glycolysis; pyruvate from D-glyceraldehyde 3-phosphate: step 3/5. Its function is as follows. Catalyzes the interconversion of 2-phosphoglycerate and 3-phosphoglycerate. This chain is 2,3-bisphosphoglycerate-independent phosphoglycerate mutase, found in Pyrococcus abyssi (strain GE5 / Orsay).